A 901-amino-acid polypeptide reads, in one-letter code: Protein translocase subunit SecA (901 aa).

ATP contacts are provided by residues Gln-87, 105–109 (GEGKT), and Asp-512. A disordered region spans residues 859-901 (HQDDDSAAAAALAAQTGERKVGRNDPCPCGSGKKYKQCHGRLQ). Zn(2+) is bound by residues Cys-885, Cys-887, Cys-896, and His-897. The span at 891-901 (KKYKQCHGRLQ) shows a compositional bias: basic residues.

This sequence belongs to the SecA family. In terms of assembly, monomer and homodimer. Part of the essential Sec protein translocation apparatus which comprises SecA, SecYEG and auxiliary proteins SecDF-YajC and YidC. It depends on Zn(2+) as a cofactor.

It is found in the cell inner membrane. Its subcellular location is the cytoplasm. It carries out the reaction ATP + H2O + cellular proteinSide 1 = ADP + phosphate + cellular proteinSide 2.. Part of the Sec protein translocase complex. Interacts with the SecYEG preprotein conducting channel. Has a central role in coupling the hydrolysis of ATP to the transfer of proteins into and across the cell membrane, serving both as a receptor for the preprotein-SecB complex and as an ATP-driven molecular motor driving the stepwise translocation of polypeptide chains across the membrane. The polypeptide is Protein translocase subunit SecA (Escherichia coli O139:H28 (strain E24377A / ETEC)).